An 82-amino-acid polypeptide reads, in one-letter code: uncharacterized protein (82 aa).

Positions 60-82 (YKRRRPDHMMKRNSPSYTGDHKT) are disordered.

This is an uncharacterized protein from Saccharomyces cerevisiae (strain ATCC 204508 / S288c) (Baker's yeast).